An 84-amino-acid polypeptide reads, in one-letter code: Apovitellenin-1 (84 aa).

The protein belongs to the apovitellenin family. Monomer.

Functionally, protein component of the very low density lipoprotein (VLDL) of egg-laying females. Potent lipoprotein lipase inhibitor, preventing the loss of triglycerides from VLDL on their way from the liver to the growing oocytes. This is Apovitellenin-1 from Dromaius novaehollandiae (Emu).